A 339-amino-acid polypeptide reads, in one-letter code: Heat-inducible transcription repressor HrcA (339 aa).

The protein belongs to the HrcA family.

Functionally, negative regulator of class I heat shock genes (grpE-dnaK-dnaJ and groELS operons). Prevents heat-shock induction of these operons. The sequence is that of Heat-inducible transcription repressor HrcA from Paraburkholderia phytofirmans (strain DSM 17436 / LMG 22146 / PsJN) (Burkholderia phytofirmans).